We begin with the raw amino-acid sequence, 116 residues long: Large ribosomal subunit protein bL19 (116 aa).

It belongs to the bacterial ribosomal protein bL19 family.

Functionally, this protein is located at the 30S-50S ribosomal subunit interface and may play a role in the structure and function of the aminoacyl-tRNA binding site. The sequence is that of Large ribosomal subunit protein bL19 from Clostridium beijerinckii (strain ATCC 51743 / NCIMB 8052) (Clostridium acetobutylicum).